A 92-amino-acid chain; its full sequence is N(2)-fixation sustaining protein CowN (92 aa).

The protein belongs to the CowN family.

Functionally, is required to sustain N(2)-dependent growth in the presence of low levels of carbon monoxide (CO). Probably acts by protecting the N(2) fixation ability of the nitrogenase complex, which is inactivated in the presence of CO. The sequence is that of N(2)-fixation sustaining protein CowN from Rhodopseudomonas palustris (strain BisB18).